Consider the following 460-residue polypeptide: UDP-glycosyltransferase 91C1 (460 aa).

UDP-alpha-D-glucose-binding positions include Thr-283, 335-337 (VPQ), 352-360 (HCGWNSVVE), and 374-377 (LNEQ).

It belongs to the UDP-glycosyltransferase family.

This is UDP-glycosyltransferase 91C1 (UGT91C1) from Arabidopsis thaliana (Mouse-ear cress).